The primary structure comprises 408 residues: DNA primase DnaG (408 aa).

A Toprim domain is found at 165–243; the sequence is PELIIVEGRA…KIDYVARAPT (79 aa). Mg(2+)-binding residues include Glu-171, Asp-216, and Asp-218.

Belongs to the archaeal DnaG primase family. Forms a ternary complex with MCM helicase and DNA. Component of the archaeal exosome complex. Mg(2+) serves as cofactor.

It catalyses the reaction ssDNA + n NTP = ssDNA/pppN(pN)n-1 hybrid + (n-1) diphosphate.. RNA polymerase that catalyzes the synthesis of short RNA molecules used as primers for DNA polymerase during DNA replication. Also part of the exosome, which is a complex involved in RNA degradation. Acts as a poly(A)-binding protein that enhances the interaction between heteromeric, adenine-rich transcripts and the exosome. The polypeptide is DNA primase DnaG (Sulfurisphaera tokodaii (strain DSM 16993 / JCM 10545 / NBRC 100140 / 7) (Sulfolobus tokodaii)).